Reading from the N-terminus, the 490-residue chain is UDP-glycosyltransferase 84A1 (490 aa).

Catalysis depends on His30, which acts as the Proton acceptor. His30 serves as a coordination point for an anthocyanidin. UDP-alpha-D-glucose contacts are provided by Gln358, His373, Trp376, Asn377, Ser378, and Glu381. Residue Gly396 coordinates an anthocyanidin. The UDP-alpha-D-glucose site is built by Asp397 and Gln398.

The protein belongs to the UDP-glycosyltransferase family. Expressed in roots, flowers and siliques.

The enzyme catalyses (E)-4-coumarate + UDP-alpha-D-glucose = 4-O-(beta-D-glucosyl)-trans-4-coumarate + UDP + H(+). It catalyses the reaction (E)-ferulate + UDP-alpha-D-glucose = 1-O-[(E)-feruloyl]-beta-D-glucose + UDP. The catalysed reaction is (E)-caffeate + UDP-alpha-D-glucose = 1-O-[(E)-caffeoyl]-beta-D-glucose + UDP. It carries out the reaction (E)-sinapate + UDP-alpha-D-glucose = 1-O-(trans-sinapoyl)-beta-D-glucose + UDP. The enzyme catalyses (E)-cinnamate + UDP-alpha-D-glucose = 1-O-(trans-cinnamoyl)-beta-D-glucose + UDP. Its function is as follows. UDP-glucosyltransferase that forms glucose esters with phenylpropanoids. Glucosylates 4-coumarate, ferulate, caffeate, sinapate and cinnamate. Can glucosylate the phytotoxic xenobiotic compound 2,4,5-trichlorophenol (TCP). This chain is UDP-glycosyltransferase 84A1, found in Arabidopsis thaliana (Mouse-ear cress).